The sequence spans 189 residues: Protein GrpE (189 aa).

The disordered stretch occupies residues M1–D24. The span at Q10–D24 shows a compositional bias: low complexity.

Belongs to the GrpE family. As to quaternary structure, homodimer.

Its subcellular location is the cytoplasm. Functionally, participates actively in the response to hyperosmotic and heat shock by preventing the aggregation of stress-denatured proteins, in association with DnaK and GrpE. It is the nucleotide exchange factor for DnaK and may function as a thermosensor. Unfolded proteins bind initially to DnaJ; upon interaction with the DnaJ-bound protein, DnaK hydrolyzes its bound ATP, resulting in the formation of a stable complex. GrpE releases ADP from DnaK; ATP binding to DnaK triggers the release of the substrate protein, thus completing the reaction cycle. Several rounds of ATP-dependent interactions between DnaJ, DnaK and GrpE are required for fully efficient folding. The chain is Protein GrpE from Ectopseudomonas mendocina (strain ymp) (Pseudomonas mendocina).